The primary structure comprises 221 residues: Protein myomaker (221 aa).

Over 1-3 (MGT) the chain is Extracellular. A helical membrane pass occupies residues 4–24 (VVAKLLLPTLSSLAFLPTVSI). At 25 to 29 (ATKRR) the chain is on the cytoplasmic side. The chain crosses the membrane as a helical span at residues 30 to 50 (FYMEAMVYLFTMFFVAFSHAC). At 51–64 (DGPGLSVLCFMRRD) the chain is on the extracellular side. A helical transmembrane segment spans residues 65 to 85 (ILEYFSIYGTALSMWVSLMAL). Residues 86-93 (ADFDEPQR) lie on the Cytoplasmic side of the membrane. Residues 94-110 (STFTMLGVLTIAVRTFH) traverse the membrane as a helical segment. Topologically, residues 111 to 113 (DRW) are extracellular. A helical membrane pass occupies residues 114-134 (GYGVYSGPIGTATLIIAVKWL). Residues 135 to 153 (KKMKEKKGLYPDKSIYTQQ) lie on the Cytoplasmic side of the membrane. The chain crosses the membrane as a helical span at residues 154 to 174 (IGPGLCFGALALMLRFFFEEW). Position 175 (Asp-175) is a topological domain, extracellular. A helical transmembrane segment spans residues 176-196 (YTYVHSFYHCALAMSFVLLLP). Topologically, residues 197 to 221 (KVNKKAGNAGAPAKLTFSTLCCTCV) are cytoplasmic. Residues Cys-217 and Cys-218 are each lipidated (S-palmitoyl cysteine).

Belongs to the TMEM8 family. Interacts with MYMX. Palmitoylated at the C-terminus; palmitoylation promotes localization to the Golgi apparatus. As to expression, specifically expressed in skeletal muscle during embryogenesis and adult muscle regeneration.

The protein resides in the cell membrane. It localises to the golgi apparatus membrane. Functionally, myoblast-specific protein that mediates myoblast fusion, an essential step for the formation of multi-nucleated muscle fibers. Actively participates in the membrane fusion reaction by mediating the mixing of cell membrane lipids (hemifusion) upstream of MYMX. Acts independently of MYMX. Involved in skeletal muscle regeneration in response to injury by mediating the fusion of satellite cells, a population of muscle stem cells, with injured myofibers. Also involved in skeletal muscle hypertrophy, probably by mediating the fusion of satellite cells with myofibers. This chain is Protein myomaker, found in Mus musculus (Mouse).